A 491-amino-acid polypeptide reads, in one-letter code: UDP-N-acetylmuramate--L-alanine ligase (491 aa).

ATP is bound at residue 126 to 132 (GTHGKTT).

It belongs to the MurCDEF family.

Its subcellular location is the cytoplasm. The enzyme catalyses UDP-N-acetyl-alpha-D-muramate + L-alanine + ATP = UDP-N-acetyl-alpha-D-muramoyl-L-alanine + ADP + phosphate + H(+). It participates in cell wall biogenesis; peptidoglycan biosynthesis. In terms of biological role, cell wall formation. The sequence is that of UDP-N-acetylmuramate--L-alanine ligase from Shigella sonnei (strain Ss046).